The following is a 372-amino-acid chain: tRNA-specific 2-thiouridylase MnmA (372 aa).

ATP is bound by residues 11 to 18 (GMSGGVDS) and Met37. The interval 97–99 (NPD) is interaction with target base in tRNA. Residue Cys102 is the Nucleophile of the active site. An intrachain disulfide couples Cys102 to Cys199. Residue Gly126 participates in ATP binding. Positions 149-151 (KDQ) are interaction with tRNA. Residue Cys199 is the Cysteine persulfide intermediate of the active site. The interval 309-310 (RY) is interaction with tRNA.

It belongs to the MnmA/TRMU family.

It is found in the cytoplasm. The enzyme catalyses S-sulfanyl-L-cysteinyl-[protein] + uridine(34) in tRNA + AH2 + ATP = 2-thiouridine(34) in tRNA + L-cysteinyl-[protein] + A + AMP + diphosphate + H(+). Functionally, catalyzes the 2-thiolation of uridine at the wobble position (U34) of tRNA, leading to the formation of s(2)U34. This Staphylococcus aureus (strain bovine RF122 / ET3-1) protein is tRNA-specific 2-thiouridylase MnmA.